Reading from the N-terminus, the 488-residue chain is 26S proteasome non-ATPase regulatory subunit 3 homolog A (488 aa).

Residues 240–421 (CRYLFYLGKI…GCMVSKETGD (182 aa)) form the PCI domain. Positions 451-488 (RFPPNTHKEKESDEKRRERKQQEEELAKHMAEEDDDDF) are disordered. The span at 456-481 (THKEKESDEKRRERKQQEEELAKHMA) shows a compositional bias: basic and acidic residues.

This sequence belongs to the proteasome subunit S3 family. In terms of assembly, component of the 19S regulatory particle (RP/PA700) lid subcomplex of the 26S proteasome. The 26S proteasome is composed of a core protease (CP), known as the 20S proteasome, capped at one or both ends by the 19S regulatory particle (RP/PA700). The RP/PA700 complex is composed of at least 17 different subunits in two subcomplexes, the base and the lid, which form the portions proximal and distal to the 20S proteolytic core, respectively. Interacts with UCH1 and UCH2. Ubiquitous with highest expression in flowers.

Acts as a regulatory subunit of the 26 proteasome which is involved in the ATP-dependent degradation of ubiquitinated proteins. The polypeptide is 26S proteasome non-ATPase regulatory subunit 3 homolog A (Arabidopsis thaliana (Mouse-ear cress)).